The following is a 314-amino-acid chain: Peroxisome biogenesis factor 10 (314 aa).

Residues 1 to 7 (MNTYVAE) lie on the Peroxisomal matrix side of the membrane. The helical transmembrane segment at 8–37 (IGEIVRSQRRDEEYIEDITERLSRVSKELL) threads the bilayer. A topological domain (cytoplasmic) is located at residue Gly-38. Residues 39-60 (QRTWIRWFPYLKSIASTLYYTS) traverse the membrane as a helical segment. The Peroxisomal matrix segment spans residues 61–90 (TVVLGNQTLGEEYVHLFESNGLERTVPSIP). Residues 91–110 (SRISFVLLHSAFPLISNYLI) traverse the membrane as a helical segment. The Cytoplasmic segment spans residues 111-142 (QKAESTLTHPSTESFLGIPIRKNQKARQSFLD). The chain crosses the membrane as a helical span at residues 143 to 166 (VFFWLRTKLFPQLQRAHIALFYIT). Residues 167–197 (GAYYSIARRFTGIRFLSASAHSDIPALKVYR) are Peroxisomal matrix-facing. The chain crosses the membrane as a helical span at residues 198-218 (FLGYITLIQLAVSIGISLYSF). The Cytoplasmic segment spans residues 219-314 (LEQEKFNNKL…PRDVTPLLNL (96 aa)). Cys-255, Cys-258, Cys-269, His-271, Cys-274, Cys-277, Cys-296, and Cys-299 together coordinate Zn(2+). The RING-type zinc finger occupies 255–300 (CSICLENKNPSALFCGHLFCWTCIQEHAVAATSSASTSSARCPQCR).

Belongs to the pex2/pex10/pex12 family. As to quaternary structure, component of the PEX2-PEX10-PEX12 retrotranslocation channel.

The protein localises to the peroxisome membrane. The catalysed reaction is S-ubiquitinyl-[E2 ubiquitin-conjugating enzyme]-L-cysteine + [acceptor protein]-L-lysine = [E2 ubiquitin-conjugating enzyme]-L-cysteine + N(6)-ubiquitinyl-[acceptor protein]-L-lysine.. It functions in the pathway protein modification; protein ubiquitination. With respect to regulation, the E3 ubiquitin-protein ligase activity is stimulated by PEX12/prx-12. In terms of biological role, E3 ubiquitin-protein ligase component of a retrotranslocation channel required for peroxisome organization by mediating export of the PEX5/prx-5 receptor from peroxisomes to the cytosol, thereby promoting PEX5/prx-5 recycling. The retrotranslocation channel is composed of PEX2/prx-2, PEX10/prx-10 and PEX12/prx-12; each subunit contributing transmembrane segments that coassemble into an open channel that specifically allows the passage of PEX5/prx-5 through the peroxisomal membrane. PEX10/prx-10 also regulates PEX5 recycling by acting as a E3 ubiquitin-protein ligase. When PEX5/prx-5 recycling is compromised, PEX10/prx-10 catalyzes polyubiquitination of PEX5/prx-5 during its passage through the retrotranslocation channel, leading to its degradation. The polypeptide is Peroxisome biogenesis factor 10 (Caenorhabditis elegans).